A 144-amino-acid polypeptide reads, in one-letter code: MLMPKRVKYRREHRGKMRGRAKGGTEVHFGEYGIQAQESSWITNRQIEAARIAMTRYMKRGGKVWIKIFPSKPYTAKPLEVRMGSGKGAPEGWVAVVKPGKVLFEISGVSEEVAREALRLASHKLPIKTKFVKREEIGGESNES.

The protein belongs to the universal ribosomal protein uL16 family. Part of the 50S ribosomal subunit.

Its function is as follows. Binds 23S rRNA and is also seen to make contacts with the A and possibly P site tRNAs. The chain is Large ribosomal subunit protein uL16 from Bacillus licheniformis (strain ATCC 14580 / DSM 13 / JCM 2505 / CCUG 7422 / NBRC 12200 / NCIMB 9375 / NCTC 10341 / NRRL NRS-1264 / Gibson 46).